We begin with the raw amino-acid sequence, 319 residues long: Probable NAD(P)H-dependent D-xylose reductase xyl1 (319 aa).

N-linked (GlcNAc...) asparagine glycosylation is present at Asn-26. Catalysis depends on Tyr-50, which acts as the Proton donor. Substrate is bound at residue His-112. Asn-141 and Asn-167 each carry an N-linked (GlcNAc...) asparagine glycan. NAD(+) contacts are provided by residues Ser-166 to Asn-167, Ser-215 to Glu-224, and Lys-271 to Asn-281.

Belongs to the aldo/keto reductase family.

The catalysed reaction is xylitol + NAD(+) = D-xylose + NADH + H(+). It catalyses the reaction xylitol + NADP(+) = D-xylose + NADPH + H(+). The protein operates within carbohydrate metabolism; D-xylose degradation. Functionally, catalyzes the initial reaction in the xylose utilization pathway by reducing D-xylose into xylitol. Xylose is a major component of hemicelluloses such as xylan. Most fungi utilize D-xylose via three enzymatic reactions, xylose reductase (XR), xylitol dehydrogenase (XDH), and xylulokinase, to form xylulose 5-phosphate, which enters pentose phosphate pathway. The polypeptide is Probable NAD(P)H-dependent D-xylose reductase xyl1 (xyl1) (Aspergillus niger (strain ATCC MYA-4892 / CBS 513.88 / FGSC A1513)).